Here is a 316-residue protein sequence, read N- to C-terminus: UDP-N-acetylenolpyruvoylglucosamine reductase (316 aa).

The region spanning 27–225 (VGGKAERFYR…KTAINALLKK (199 aa)) is the FAD-binding PCMH-type domain. Residue Arg-190 is part of the active site. Ser-239 functions as the Proton donor in the catalytic mechanism. Glu-309 is a catalytic residue.

The protein belongs to the MurB family. It depends on FAD as a cofactor.

The protein resides in the cytoplasm. It catalyses the reaction UDP-N-acetyl-alpha-D-muramate + NADP(+) = UDP-N-acetyl-3-O-(1-carboxyvinyl)-alpha-D-glucosamine + NADPH + H(+). The protein operates within cell wall biogenesis; peptidoglycan biosynthesis. In terms of biological role, cell wall formation. The polypeptide is UDP-N-acetylenolpyruvoylglucosamine reductase (Coxiella burnetii (strain CbuG_Q212) (Coxiella burnetii (strain Q212))).